Here is a 133-residue protein sequence, read N- to C-terminus: MFKDVVEEFKKFAIKGNAIDLAVGVVIGGAFGKIVTSLVQDIIMPAVGLLLGKVNFKTLSLTVTSIDGSEIVLKYGQFIQSVVDFIIISFSIFLFVKLINSFKKKEEEKPKVEEPSKEEKLLAEIRDILKESK.

The next 2 membrane-spanning stretches (helical) occupy residues Ile19–Val39 and Ile79–Ile99.

It belongs to the MscL family. Homopentamer.

The protein localises to the cell membrane. Its function is as follows. Channel that opens in response to stretch forces in the membrane lipid bilayer. May participate in the regulation of osmotic pressure changes within the cell. The polypeptide is Large-conductance mechanosensitive channel (Clostridium tetani (strain Massachusetts / E88)).